Consider the following 688-residue polypeptide: UvrABC system protein B (688 aa).

One can recognise a Helicase ATP-binding domain in the interval 41-429; it reads ANFEAGLAKQ…AGEVTELVVR (389 aa). Position 54 to 61 (54 to 61) interacts with ATP; that stretch reads GVTGSGKT. The Beta-hairpin signature appears at 107–130; the sequence is YYDYYQPEAYVPSSDTFIEKDSSI. A Helicase C-terminal domain is found at 446–612; it reads QVDDLMSEIH…SVERPISDIM (167 aa). The tract at residues 616–646 is disordered; that stretch reads REDAAEKKSGKGRSKSRQVAEETPDYRAMKP. Residues 633–645 show a composition bias toward basic and acidic residues; sequence QVAEETPDYRAMK. The region spanning 650–685 is the UVR domain; that stretch reads AGKLKSLEQKMYQHAKDLEFEAAAQIRDQIQKLKTA.

Belongs to the UvrB family. As to quaternary structure, forms a heterotetramer with UvrA during the search for lesions. Interacts with UvrC in an incision complex.

It localises to the cytoplasm. In terms of biological role, the UvrABC repair system catalyzes the recognition and processing of DNA lesions. A damage recognition complex composed of 2 UvrA and 2 UvrB subunits scans DNA for abnormalities. Upon binding of the UvrA(2)B(2) complex to a putative damaged site, the DNA wraps around one UvrB monomer. DNA wrap is dependent on ATP binding by UvrB and probably causes local melting of the DNA helix, facilitating insertion of UvrB beta-hairpin between the DNA strands. Then UvrB probes one DNA strand for the presence of a lesion. If a lesion is found the UvrA subunits dissociate and the UvrB-DNA preincision complex is formed. This complex is subsequently bound by UvrC and the second UvrB is released. If no lesion is found, the DNA wraps around the other UvrB subunit that will check the other stand for damage. In Xanthomonas oryzae pv. oryzae (strain KACC10331 / KXO85), this protein is UvrABC system protein B.